Reading from the N-terminus, the 250-residue chain is Indole-3-glycerol phosphate synthase (250 aa).

The protein belongs to the TrpC family.

The catalysed reaction is 1-(2-carboxyphenylamino)-1-deoxy-D-ribulose 5-phosphate + H(+) = (1S,2R)-1-C-(indol-3-yl)glycerol 3-phosphate + CO2 + H2O. It participates in amino-acid biosynthesis; L-tryptophan biosynthesis; L-tryptophan from chorismate: step 4/5. This chain is Indole-3-glycerol phosphate synthase, found in Metallosphaera sedula (strain ATCC 51363 / DSM 5348 / JCM 9185 / NBRC 15509 / TH2).